An 88-amino-acid chain; its full sequence is uncharacterized protein (88 aa).

A signal peptide spans 1 to 24 (MLPRSCKDFYETLRTAVLCGQACA).

To Rhizobium NGR234A y4oL.

This is an uncharacterized protein from Sinorhizobium fredii (strain NBRC 101917 / NGR234).